The primary structure comprises 381 residues: E3 ubiquitin-protein ligase ATL15 (381 aa).

The N-terminal stretch at 1–23 is a signal peptide; that stretch reads MVVMSRVSFYSSFLLLLLEVVVA. A helical membrane pass occupies residues 40–60; the sequence is AIIMIVLVSVFFALGCISVYM. Residues 118 to 160 form an RING-type; atypical zinc finger; the sequence is CPVCLNEFEDDETLRLIPQCCHVFHPGCIDAWLRSQTTCPLCR.

It belongs to the RING-type zinc finger family. ATL subfamily.

The protein resides in the membrane. It catalyses the reaction S-ubiquitinyl-[E2 ubiquitin-conjugating enzyme]-L-cysteine + [acceptor protein]-L-lysine = [E2 ubiquitin-conjugating enzyme]-L-cysteine + N(6)-ubiquitinyl-[acceptor protein]-L-lysine.. It functions in the pathway protein modification; protein ubiquitination. Its function is as follows. E3 ubiquitin-protein ligase able to catalyze polyubiquitination with ubiquitin-conjugating enzyme E2 UBC8, UBC10, UBC11, UBC28 and UBC29 in vitro. The chain is E3 ubiquitin-protein ligase ATL15 (ATL15) from Arabidopsis thaliana (Mouse-ear cress).